Here is a 678-residue protein sequence, read N- to C-terminus: DNA ligase (678 aa).

NAD(+)-binding positions include aspartate 47–aspartate 51, serine 96–leucine 97, and glutamate 122. Lysine 124 acts as the N6-AMP-lysine intermediate in catalysis. Arginine 145, glutamate 182, lysine 300, and lysine 324 together coordinate NAD(+). Zn(2+) is bound by residues cysteine 418, cysteine 421, cysteine 436, and cysteine 442. In terms of domain architecture, BRCT spans alanine 602–leucine 678.

The protein belongs to the NAD-dependent DNA ligase family. LigA subfamily. It depends on Mg(2+) as a cofactor. Mn(2+) serves as cofactor.

The catalysed reaction is NAD(+) + (deoxyribonucleotide)n-3'-hydroxyl + 5'-phospho-(deoxyribonucleotide)m = (deoxyribonucleotide)n+m + AMP + beta-nicotinamide D-nucleotide.. In terms of biological role, DNA ligase that catalyzes the formation of phosphodiester linkages between 5'-phosphoryl and 3'-hydroxyl groups in double-stranded DNA using NAD as a coenzyme and as the energy source for the reaction. It is essential for DNA replication and repair of damaged DNA. The chain is DNA ligase from Francisella tularensis subsp. holarctica (strain OSU18).